A 302-amino-acid chain; its full sequence is Ornithine carbamoyltransferase (302 aa).

Residues 52-55 (STRT), Gln79, Arg103, and 130-133 (HPCQ) each bind carbamoyl phosphate. L-ornithine is bound by residues Asn161, Asp222, and 226–227 (SM). Residues 262–263 (CL) and Arg290 contribute to the carbamoyl phosphate site.

Belongs to the aspartate/ornithine carbamoyltransferase superfamily. OTCase family.

Its subcellular location is the cytoplasm. The enzyme catalyses carbamoyl phosphate + L-ornithine = L-citrulline + phosphate + H(+). Its pathway is amino-acid biosynthesis; L-arginine biosynthesis; L-arginine from L-ornithine and carbamoyl phosphate: step 1/3. Reversibly catalyzes the transfer of the carbamoyl group from carbamoyl phosphate (CP) to the N(epsilon) atom of ornithine (ORN) to produce L-citrulline. This chain is Ornithine carbamoyltransferase, found in Syntrophus aciditrophicus (strain SB).